A 245-amino-acid polypeptide reads, in one-letter code: Small ribosomal subunit protein uS2 (245 aa).

It belongs to the universal ribosomal protein uS2 family.

The protein is Small ribosomal subunit protein uS2 of Pseudomonas putida (strain ATCC 47054 / DSM 6125 / CFBP 8728 / NCIMB 11950 / KT2440).